The primary structure comprises 442 residues: Probable protein phosphatase 2C 15 (442 aa).

In terms of domain architecture, PPM-type phosphatase spans 35–303 (AAERPELQVG…DDTTCIVVDI (269 aa)). Asp-80, Gly-81, Asp-255, and Asp-294 together coordinate Mn(2+). A compositionally biased stretch (basic and acidic residues) spans 420–434 (KKEAMEGKRRSRDSS). The tract at residues 420-442 (KKEAMEGKRRSRDSSSRNSGSSE) is disordered.

Belongs to the PP2C family. The cofactor is Mg(2+). Mn(2+) is required as a cofactor.

The catalysed reaction is O-phospho-L-seryl-[protein] + H2O = L-seryl-[protein] + phosphate. It catalyses the reaction O-phospho-L-threonyl-[protein] + H2O = L-threonyl-[protein] + phosphate. In Oryza sativa subsp. japonica (Rice), this protein is Probable protein phosphatase 2C 15.